The sequence spans 382 residues: Homeobox protein SHOOT MERISTEMLESS (382 aa).

The segment at 26–59 is disordered; sequence MMMMMPPIMTSHQHHGHDHQHQQQEHDGYAYQSH. The segment covering 44 to 53 has biased composition (basic and acidic residues); sequence HQHQQQEHDG. The ELK domain maps to 262–282; that stretch reads ELKGQLLRKYSGYLGSLKQEF. The segment at residues 283–346 is a DNA-binding region (homeobox; TALE-type); sequence MKKRKKGKLP…NQRKRHWKPS (64 aa).

Belongs to the TALE/KNOX homeobox family. As to quaternary structure, forms homodimers. May form heterodimeric complexes with TALE/BELL proteins BEL1, BLH2, BLH3, BLH8/PNF, BLH9/PNY and ATH1. Interacts with CCT8. Binds to MBP2C; this interaction reduces RNA binding capacity. Interacts with FTIP3 and FTIP4. As to expression, expressed in all four types of shoot apical meristems (SAM) i.e. in vegetative, axillary, inflorescence and floral.

It is found in the nucleus. The protein resides in the cell junction. Its subcellular location is the plasmodesma. The protein localises to the cytoplasm. It localises to the endosome. It is found in the cell membrane. Its function is as follows. Required for shoot apical meristem (SAM) formation during embryogenesis. Negatively regulates ASYMMETRIC LEAVES1 (AS1) and ASYMMETRIC LEAVES2 (AS2 or LBD6). Probably binds to the DNA sequence 5'-TGAC-3'. Binds to RNA. This chain is Homeobox protein SHOOT MERISTEMLESS, found in Arabidopsis thaliana (Mouse-ear cress).